The sequence spans 487 residues: Variant surface glycoprotein WRATAT B (487 aa).

The N-terminal stretch at 1–19 is a signal peptide; the sequence is MWIILALLTLAGSRVAHGA. Residues asparagine 71, asparagine 84, asparagine 418, and asparagine 465 are each glycosylated (N-linked (GlcNAc...) asparagine). Residues 443-468 form a disordered region; sequence KPKAGTEAATTGPGERDAGATANTTG. A lipid anchor (GPI-anchor amidated serine) is attached at serine 470. The propeptide at 471–487 is removed in mature form; that stretch reads NSFVIKTSPLLFAFLLF.

Its subcellular location is the cell membrane. Its function is as follows. VSG forms a coat on the surface of the parasite. The trypanosome evades the immune response of the host by expressing a series of antigenically distinct VSGs from an estimated 1000 VSG genes. This chain is Variant surface glycoprotein WRATAT B, found in Trypanosoma brucei rhodesiense.